A 26-amino-acid chain; its full sequence is Ribulose bisphosphate carboxylase large chain (26 aa).

A propeptide spanning residues 1–2 is cleaved from the precursor; it reads MS. An N-acetylproline modification is found at proline 3.

It belongs to the RuBisCO large chain family. Type I subfamily. In terms of assembly, heterohexadecamer of 8 large chains and 8 small chains.

It localises to the plastid. Its subcellular location is the chloroplast. It carries out the reaction 2 (2R)-3-phosphoglycerate + 2 H(+) = D-ribulose 1,5-bisphosphate + CO2 + H2O. It catalyses the reaction D-ribulose 1,5-bisphosphate + O2 = 2-phosphoglycolate + (2R)-3-phosphoglycerate + 2 H(+). RuBisCO catalyzes two reactions: the carboxylation of D-ribulose 1,5-bisphosphate, the primary event in carbon dioxide fixation, as well as the oxidative fragmentation of the pentose substrate in the photorespiration process. Both reactions occur simultaneously and in competition at the same active site. The protein is Ribulose bisphosphate carboxylase large chain (rbcL) of Vicia faba (Broad bean).